The following is a 392-amino-acid chain: uncharacterized protein (392 aa).

Transmembrane regions (helical) follow at residues 2 to 23 (WLAN…SLYI), 38 to 60 (SGYV…GRFG), 73 to 95 (GTGI…LFFL), 153 to 175 (FTYT…LFGV), 195 to 217 (VLSY…LIQT), 237 to 259 (VNLA…LLAR), 272 to 291 (RILI…QALA), 297 to 319 (LLVF…TAAI), 331 to 353 (VLGY…GGII), and 357 to 379 (FTIS…MLWI).

The protein belongs to the major facilitator superfamily.

The protein localises to the cell membrane. This is an uncharacterized protein from Bacillus subtilis (strain 168).